The chain runs to 351 residues: Molybdenum import ATP-binding protein ModC (351 aa).

The ABC transporter domain occupies Met1–Thr229. Gly31 to Ser38 contributes to the ATP binding site. Residues His290 to Leu351 enclose the Mop domain.

The protein belongs to the ABC transporter superfamily. Molybdate importer (TC 3.A.1.8) family. In terms of assembly, the complex is composed of two ATP-binding proteins (ModC), two transmembrane proteins (ModB) and a solute-binding protein (ModA).

It localises to the cell inner membrane. It catalyses the reaction molybdate(out) + ATP + H2O = molybdate(in) + ADP + phosphate + H(+). In terms of biological role, part of the ABC transporter complex ModABC involved in molybdenum import. Responsible for energy coupling to the transport system. This is Molybdenum import ATP-binding protein ModC from Haemophilus ducreyi (strain 35000HP / ATCC 700724).